Consider the following 137-residue polypeptide: Nucleoside diphosphate kinase (137 aa).

Positions 9, 57, 85, 91, 102, and 112 each coordinate ATP. H115 (pros-phosphohistidine intermediate) is an active-site residue.

This sequence belongs to the NDK family. As to quaternary structure, homotetramer. Mg(2+) is required as a cofactor.

The protein localises to the cytoplasm. It catalyses the reaction a 2'-deoxyribonucleoside 5'-diphosphate + ATP = a 2'-deoxyribonucleoside 5'-triphosphate + ADP. The catalysed reaction is a ribonucleoside 5'-diphosphate + ATP = a ribonucleoside 5'-triphosphate + ADP. Its function is as follows. Major role in the synthesis of nucleoside triphosphates other than ATP. The ATP gamma phosphate is transferred to the NDP beta phosphate via a ping-pong mechanism, using a phosphorylated active-site intermediate. The chain is Nucleoside diphosphate kinase from Sulfurovum sp. (strain NBC37-1).